Reading from the N-terminus, the 159-residue chain is Transcription elongation factor GreA (159 aa).

Residues 44-75 adopt a coiled-coil conformation; it reads SENAEYDAAREQQSQTEARIADLESKLSSATI.

It belongs to the GreA/GreB family.

Functionally, necessary for efficient RNA polymerase transcription elongation past template-encoded arresting sites. The arresting sites in DNA have the property of trapping a certain fraction of elongating RNA polymerases that pass through, resulting in locked ternary complexes. Cleavage of the nascent transcript by cleavage factors such as GreA or GreB allows the resumption of elongation from the new 3'terminus. GreA releases sequences of 2 to 3 nucleotides. In Chlorobium phaeovibrioides (strain DSM 265 / 1930) (Prosthecochloris vibrioformis (strain DSM 265)), this protein is Transcription elongation factor GreA.